The sequence spans 190 residues: Xanthine phosphoribosyltransferase (190 aa).

Residues L20 and N27 each contribute to the xanthine site. 128-132 (ANGHA) is a 5-phospho-alpha-D-ribose 1-diphosphate binding site. K156 is a xanthine binding site.

It belongs to the purine/pyrimidine phosphoribosyltransferase family. Xpt subfamily. In terms of assembly, homodimer.

Its subcellular location is the cytoplasm. The catalysed reaction is XMP + diphosphate = xanthine + 5-phospho-alpha-D-ribose 1-diphosphate. It functions in the pathway purine metabolism; XMP biosynthesis via salvage pathway; XMP from xanthine: step 1/1. In terms of biological role, converts the preformed base xanthine, a product of nucleic acid breakdown, to xanthosine 5'-monophosphate (XMP), so it can be reused for RNA or DNA synthesis. The sequence is that of Xanthine phosphoribosyltransferase from Pseudomonas paraeruginosa (strain DSM 24068 / PA7) (Pseudomonas aeruginosa (strain PA7)).